Reading from the N-terminus, the 574-residue chain is Interleukin-22 receptor subunit alpha-1 (574 aa).

The signal sequence occupies residues 1-15 (MRTLLTILTVGSLAA). Residues 16–228 (HAPEDPSDLL…VKTLPDRTWT (213 aa)) are Extracellular-facing. 2 Fibronectin type-III domains span residues 17-124 (APED…LKPP) and 141-221 (PTPT…RVKT). A disulfide bond links Cys-71 and Cys-79. N-linked (GlcNAc...) asparagine glycans are attached at residues Asn-80 and Asn-172. An intrachain disulfide couples Cys-128 to Cys-217. Residues 229-249 (YSFSGAFLFSMGFLVAVLCYL) form a helical membrane-spanning segment. At 250 to 574 (SYRYVTKPPA…GLALTVQWES (325 aa)) the chain is on the cytoplasmic side. Disordered regions lie at residues 388–440 (SSYA…AGSC), 454–489 (AMEESQEAKSLHQPLGICTDRTSDPNVLHSGEEGTP), and 507–560 (HPMS…TELD). Residues Ser-410 and Ser-414 each carry the phosphoserine modification.

This sequence belongs to the type II cytokine receptor family. As to quaternary structure, heterodimer with IL10RB and with IL20RB. IL22 binding to heterodimer is greater than binding to IL22RA1 alone. Interacts with FBXW12; the interaction promotes ubiquitination of IL22RA1. Post-translationally, ubiquitinated. As to expression, expressed in colon, liver, lung, pancreas and kidney. No expression in immune cells such as monocytes, T-cells, and NK-cells. Expressed in keratinocytes of normal skin as well as in psoriatic skin lesion. Detected in normal blood brain barrier endothelial cells as well as in multiple sclerosis lesions; Strongly expressed on central nervous system vessels within infiltrated multiple sclerosis lesions. Overexpressed in synovial fluid cells from rheumatoid arthritis and spondyloarthropathy patients.

It localises to the cell membrane. Its function is as follows. Component of the receptor for IL20, IL22 and IL24. Component of IL22 receptor formed by IL22RA1 and IL10RB enabling IL22 signaling via JAK/STAT pathways. IL22 also induces activation of MAPK1/MAPK3 and Akt kinases pathways. Component of one of the receptor for IL20 and IL24 formed by IL22RA1 and IL20RB also signaling through STATs activation. Mediates IL24 antiangiogenic activity as well as IL24 inhibitory effect on endothelial cell tube formation and differentiation. This is Interleukin-22 receptor subunit alpha-1 (IL22RA1) from Homo sapiens (Human).